The sequence spans 313 residues: Protein phosphatase PTC7 homolog fig (313 aa).

A PPM-type phosphatase domain is found at 47–307 (KEPLTDLQLR…DDITVILASL (261 aa)). The Mn(2+) site is built by D83, G84, and D229.

This sequence belongs to the PP2C family. It depends on Mg(2+) as a cofactor. The cofactor is Mn(2+).

It carries out the reaction O-phospho-L-seryl-[protein] + H2O = L-seryl-[protein] + phosphate. The catalysed reaction is O-phospho-L-threonyl-[protein] + H2O = L-threonyl-[protein] + phosphate. In Drosophila virilis (Fruit fly), this protein is Protein phosphatase PTC7 homolog fig.